The sequence spans 120 residues: Large ribosomal subunit protein bL17 (120 aa).

This sequence belongs to the bacterial ribosomal protein bL17 family. Part of the 50S ribosomal subunit. Contacts protein L32.

The protein is Large ribosomal subunit protein bL17 of Bacillus subtilis (strain 168).